A 274-amino-acid polypeptide reads, in one-letter code: Rhamnulose-1-phosphate aldolase (274 aa).

Residue Glu117 is part of the active site. The Zn(2+) site is built by His141, His143, and His212.

It belongs to the aldolase class II family. RhaD subfamily. Homotetramer. It depends on Zn(2+) as a cofactor.

It localises to the cytoplasm. The catalysed reaction is L-rhamnulose 1-phosphate = (S)-lactaldehyde + dihydroxyacetone phosphate. The protein operates within carbohydrate degradation; L-rhamnose degradation; glycerone phosphate from L-rhamnose: step 3/3. Catalyzes the reversible cleavage of L-rhamnulose-1-phosphate to dihydroxyacetone phosphate (DHAP) and L-lactaldehyde. The protein is Rhamnulose-1-phosphate aldolase of Escherichia coli (strain SE11).